Consider the following 504-residue polypeptide: MPIKFDVTQEHIESYPNFCIVTGVFNDSYLFPSTIQIDKMSQGYISSLLKRNNFNGSINQHLLLYDAPYFFNKLILLIGCGKKNEFKSQSYNTVIHYIINFCKKSSITKILLLLSELNIDGYDNYWKIRNSITLCNNECYIFNKFKNINDVTKKNITYEIISYIDKLDNNFQYCKQAVKDGLAIAKGLNIAKNLGNMPSNYCTPNYLSNKVQELSNYNTDLDIEIINELQLKTIGMHAYLAVGSGSIYPAVMPIIKYQKNPKGPNTNPIILIGKGVTFDSGGISIKPSDKMDEMKYDMCGAAAVYAIMSIVSELQLPLNIIGILAVSENMISSKSLKPGDILTTLSGQTIEILNTDAEGRLLLCDVLTYVERYNPEIVIDIATLTGACVIALGNHYSGLMSNDNNLSNNLIFASKQTRDYIWRLPLDENFEKQLESSCADIANVGGRSGGAITAACFLKKFAHKYKWMHLDIAGSAWISKNCVKSSTGRPVELLTQFLINISKI.

Mn(2+) contacts are provided by lysine 274 and aspartate 279. Residue lysine 286 is part of the active site. Residues aspartate 297, aspartate 356, and glutamate 358 each coordinate Mn(2+). The active site involves arginine 360.

The protein belongs to the peptidase M17 family. Requires Mn(2+) as cofactor.

Its subcellular location is the cytoplasm. The catalysed reaction is Release of an N-terminal amino acid, Xaa-|-Yaa-, in which Xaa is preferably Leu, but may be other amino acids including Pro although not Arg or Lys, and Yaa may be Pro. Amino acid amides and methyl esters are also readily hydrolyzed, but rates on arylamides are exceedingly low.. The enzyme catalyses Release of an N-terminal amino acid, preferentially leucine, but not glutamic or aspartic acids.. Functionally, presumably involved in the processing and regular turnover of intracellular proteins. Catalyzes the removal of unsubstituted N-terminal amino acids from various peptides. This Blochmanniella floridana protein is Probable cytosol aminopeptidase.